A 423-amino-acid chain; its full sequence is Glutamate-1-semialdehyde 2,1-aminomutase (423 aa).

Lysine 262 is modified (N6-(pyridoxal phosphate)lysine).

It belongs to the class-III pyridoxal-phosphate-dependent aminotransferase family. HemL subfamily. Pyridoxal 5'-phosphate serves as cofactor.

It is found in the cytoplasm. The catalysed reaction is (S)-4-amino-5-oxopentanoate = 5-aminolevulinate. It participates in porphyrin-containing compound metabolism; protoporphyrin-IX biosynthesis; 5-aminolevulinate from L-glutamyl-tRNA(Glu): step 2/2. This Methanosphaera stadtmanae (strain ATCC 43021 / DSM 3091 / JCM 11832 / MCB-3) protein is Glutamate-1-semialdehyde 2,1-aminomutase.